Here is a 300-residue protein sequence, read N- to C-terminus: uncharacterized protein (300 aa).

This is an uncharacterized protein from Methanocaldococcus jannaschii (strain ATCC 43067 / DSM 2661 / JAL-1 / JCM 10045 / NBRC 100440) (Methanococcus jannaschii).